The chain runs to 968 residues: RNA polymerase-associated protein RapA (968 aa).

Residues 164 to 334 (EVGQRHAPRV…FARLRLLDPN (171 aa)) form the Helicase ATP-binding domain. 177–184 (DEVGLGKT) contacts ATP. Positions 280 to 283 (DEAH) match the DEAH box motif. One can recognise a Helicase C-terminal domain in the interval 490–664 (RVEWLLNYLV…AAPTEQEGLD (175 aa)).

The protein belongs to the SNF2/RAD54 helicase family. RapA subfamily. As to quaternary structure, interacts with the RNAP. Has a higher affinity for the core RNAP than for the holoenzyme. Its ATPase activity is stimulated by binding to RNAP.

Transcription regulator that activates transcription by stimulating RNA polymerase (RNAP) recycling in case of stress conditions such as supercoiled DNA or high salt concentrations. Probably acts by releasing the RNAP, when it is trapped or immobilized on tightly supercoiled DNA. Does not activate transcription on linear DNA. Probably not involved in DNA repair. In Serratia proteamaculans (strain 568), this protein is RNA polymerase-associated protein RapA.